A 186-amino-acid polypeptide reads, in one-letter code: MTLLVGLGNPTLRYAHTRHNAGFDILDSLVSELDLSFTFSSKHNAYLCVYKDFILLKPQTYMNLSGESVLSAKNFYKPKELLIVHDDLDLPLGVVRFKKGGGNGGHNGLKSIDLLCSNSYYRLRVGISKGIDVIEHVLSKFHKNEEPLKNAVFEHAKNALKFFIESHDFNAMQNRFTLKKPLIIES.

Tyr14 contacts tRNA. The active-site Proton acceptor is the His19. TRNA contacts are provided by Tyr61, Asn63, and Asn107.

This sequence belongs to the PTH family. In terms of assembly, monomer.

It localises to the cytoplasm. It catalyses the reaction an N-acyl-L-alpha-aminoacyl-tRNA + H2O = an N-acyl-L-amino acid + a tRNA + H(+). Hydrolyzes ribosome-free peptidyl-tRNAs (with 1 or more amino acids incorporated), which drop off the ribosome during protein synthesis, or as a result of ribosome stalling. In terms of biological role, catalyzes the release of premature peptidyl moieties from peptidyl-tRNA molecules trapped in stalled 50S ribosomal subunits, and thus maintains levels of free tRNAs and 50S ribosomes. In Helicobacter pylori (strain P12), this protein is Peptidyl-tRNA hydrolase.